Reading from the N-terminus, the 325-residue chain is Ribonucleoside-diphosphate reductase small chain (325 aa).

The Fe cation site is built by D74, E105, and H108. The active site involves Y112. Fe cation is bound by residues E168, E202, and H205.

Belongs to the ribonucleoside diphosphate reductase small chain family. Heterodimer of a large and a small chain. The cofactor is Fe cation.

The catalysed reaction is a 2'-deoxyribonucleoside 5'-diphosphate + [thioredoxin]-disulfide + H2O = a ribonucleoside 5'-diphosphate + [thioredoxin]-dithiol. Functionally, ribonucleoside-diphosphate reductase holoenzyme provides the precursors necessary for viral DNA synthesis. Allows virus growth in non-dividing cells. Catalyzes the biosynthesis of deoxyribonucleotides from the corresponding ribonucleotides. This is Ribonucleoside-diphosphate reductase small chain from Yaba-like disease virus (YLDV).